The sequence spans 281 residues: Shikimate dehydrogenase (NADP(+)) (281 aa).

Shikimate contacts are provided by residues 19-21 and Thr-66; that span reads SFS. Lys-70 serves as the catalytic Proton acceptor. 2 residues coordinate shikimate: Asn-91 and Asp-104. Residues 127-131 and Ile-223 contribute to the NADP(+) site; that span reads GAGGA. Tyr-225 contacts shikimate. Position 246 (Gly-246) interacts with NADP(+).

This sequence belongs to the shikimate dehydrogenase family. As to quaternary structure, homodimer.

The enzyme catalyses shikimate + NADP(+) = 3-dehydroshikimate + NADPH + H(+). Its pathway is metabolic intermediate biosynthesis; chorismate biosynthesis; chorismate from D-erythrose 4-phosphate and phosphoenolpyruvate: step 4/7. In terms of biological role, involved in the biosynthesis of the chorismate, which leads to the biosynthesis of aromatic amino acids. Catalyzes the reversible NADPH linked reduction of 3-dehydroshikimate (DHSA) to yield shikimate (SA). This Methanobrevibacter smithii (strain ATCC 35061 / DSM 861 / OCM 144 / PS) protein is Shikimate dehydrogenase (NADP(+)).